Here is a 485-residue protein sequence, read N- to C-terminus: NADH-quinone oxidoreductase subunit N (485 aa).

Helical transmembrane passes span 8–28 (LIAL…MLSI), 35–55 (FLNA…LWFV), 71–91 (GFAM…CTFA), 105–125 (FYLL…ANHL), 127–147 (SLFL…GYAF), 159–179 (YTIL…LVYA), 203–223 (LLAG…LVPF), 235–255 (PAPV…GVVM), 271–291 (VVLA…ALSQ), 297–317 (LLGY…IALQ), 326–346 (VGVY…VVSL), 373–393 (AAVM…LGFI), 408–430 (WWLV…RVAV), and 455–475 (IVVL…QPLI).

It belongs to the complex I subunit 2 family. In terms of assembly, NDH-1 is composed of 13 different subunits. Subunits NuoA, H, J, K, L, M, N constitute the membrane sector of the complex.

The protein resides in the cell inner membrane. It carries out the reaction a quinone + NADH + 5 H(+)(in) = a quinol + NAD(+) + 4 H(+)(out). In terms of biological role, NDH-1 shuttles electrons from NADH, via FMN and iron-sulfur (Fe-S) centers, to quinones in the respiratory chain. The immediate electron acceptor for the enzyme in this species is believed to be ubiquinone. Couples the redox reaction to proton translocation (for every two electrons transferred, four hydrogen ions are translocated across the cytoplasmic membrane), and thus conserves the redox energy in a proton gradient. The sequence is that of NADH-quinone oxidoreductase subunit N from Escherichia coli O81 (strain ED1a).